A 799-amino-acid chain; its full sequence is ATP-dependent DNA helicase Hel308 (799 aa).

ATP-binding positions include Gln-29 and 47–54; that span reads IPTASGKT. The Helicase ATP-binding domain maps to 34–200; sequence EAGVTEGENL…WLDAGLVDSD (167 aa). Positions 145–148 match the DEAH box motif; it reads DEVH. A Helicase C-terminal domain is found at 234 to 435; the sequence is QTAAIVRDTL…EPALRTHILA (202 aa). Disordered stretches follow at residues 522-566 and 750-799; these read RGAS…DRDP and NVLE…LGDF. Residues 553 to 566 show a composition bias toward acidic residues; that stretch reads LAEDADESDADRDP.

This sequence belongs to the helicase family. Hel308 subfamily. As to quaternary structure, monomer.

The catalysed reaction is Couples ATP hydrolysis with the unwinding of duplex DNA by translocating in the 3'-5' direction.. The enzyme catalyses ATP + H2O = ADP + phosphate + H(+). Functionally, DNA-dependent ATPase and 3'-5' DNA helicase that may be involved in repair of stalled replication forks. The polypeptide is ATP-dependent DNA helicase Hel308 (Haloarcula marismortui (strain ATCC 43049 / DSM 3752 / JCM 8966 / VKM B-1809) (Halobacterium marismortui)).